We begin with the raw amino-acid sequence, 251 residues long: Triosephosphate isomerase 1 (251 aa).

9 to 11 (NWK) lines the substrate pocket. The active-site Electrophile is the histidine 95. Catalysis depends on glutamate 167, which acts as the Proton acceptor. Substrate-binding positions include glycine 173, serine 213, and 234–235 (GG).

This sequence belongs to the triosephosphate isomerase family. In terms of assembly, homodimer.

The protein resides in the cytoplasm. The catalysed reaction is D-glyceraldehyde 3-phosphate = dihydroxyacetone phosphate. It functions in the pathway carbohydrate biosynthesis; gluconeogenesis. The protein operates within carbohydrate degradation; glycolysis; D-glyceraldehyde 3-phosphate from glycerone phosphate: step 1/1. In terms of biological role, involved in the gluconeogenesis. Catalyzes stereospecifically the conversion of dihydroxyacetone phosphate (DHAP) to D-glyceraldehyde-3-phosphate (G3P). This is Triosephosphate isomerase 1 from Listeria monocytogenes serovar 1/2a (strain ATCC BAA-679 / EGD-e).